The chain runs to 340 residues: Guanine nucleotide-binding protein G(I)/G(S)/G(T) subunit beta-1 (340 aa).

7 WD repeats span residues 53–83 (GHLA…IIWD), 95–125 (LRSS…SIYN), 141–170 (GHTG…ALWD), 182–212 (GHTG…KLWD), 224–254 (GHES…RLFD), 268–298 (NIIC…NVWD), and 310–340 (GHDN…KIWN).

Belongs to the WD repeat G protein beta family. As to quaternary structure, g proteins are composed of 3 units, alpha, beta and gamma.

Guanine nucleotide-binding proteins (G proteins) are involved as a modulator or transducer in various transmembrane signaling systems. The beta and gamma chains are required for the GTPase activity, for replacement of GDP by GTP, and for G protein-effector interaction. The sequence is that of Guanine nucleotide-binding protein G(I)/G(S)/G(T) subunit beta-1 (gnb1) from Danio rerio (Zebrafish).